The following is a 142-amino-acid chain: Transcriptional regulator MraZ (142 aa).

2 consecutive SpoVT-AbrB domains span residues T5–E47 and A76–A119.

It belongs to the MraZ family. Forms oligomers.

It is found in the cytoplasm. The protein localises to the nucleoid. The polypeptide is Transcriptional regulator MraZ (Salinispora tropica (strain ATCC BAA-916 / DSM 44818 / JCM 13857 / NBRC 105044 / CNB-440)).